The primary structure comprises 369 residues: Septin-5 (369 aa).

T13 is subject to Phosphothreonine. One can recognise a Septin-type G domain in the interval 41-314; sequence KGFDFTLMVA…ENYRAHCIQQ (274 aa). The G1 motif stretch occupies residues 51–58; it reads GESGLGKS. Residues 51–58, T85, and G111 contribute to the GTP site; that span reads GESGLGKS. The tract at residues 108–111 is G3 motif; sequence DTPG. The residue at position 168 (R168) is an Omega-N-methylarginine. Positions 189–192 are G4 motif; it reads AKAD. 190-198 serves as a coordination point for GTP; it reads KADCLVPSE. S225 carries the post-translational modification Phosphoserine. GTP-binding residues include G248 and R263. At S327 the chain carries Phosphoserine. Position 336 is a phosphothreonine (T336). Residues 338–369 are a coiled coil; sequence DSETEKLIRMKDEELRRMQEMLQKMKQRMQDQ.

Belongs to the TRAFAC class TrmE-Era-EngA-EngB-Septin-like GTPase superfamily. Septin GTPase family. As to quaternary structure, septins polymerize into heterooligomeric protein complexes that form filaments, and can associate with cellular membranes, actin filaments and microtubules. GTPase activity is required for filament formation. Interacts with SEPTIN2 and SEPTIN5. In platelets, associated with a complex containing STX4. Interacts with PRKN; this interaction leads to SEPTIN5 ubiquitination and degradation. Interacts with DYRK1A. Interacts with STX1A; in the cerebellar cortex. In terms of processing, phosphorylated by DYRK1A. Expressed in brain and testis and at lower level in heart, spleen, lung and kidney.

Its subcellular location is the cytoplasm. The protein resides in the cytoskeleton. In terms of biological role, filament-forming cytoskeletal GTPase. May play a role in cytokinesis (Potential). May play a role in platelet secretion. In Rattus norvegicus (Rat), this protein is Septin-5.